Consider the following 236-residue polypeptide: MQTRPRFAVQSLFAILATAAALVAGCSSSSETSDAPLPDGAALLQESASKTKTQQSVHLLLTVQGKVDGLPVEKLDGDLTNAPAVAAEGTADLIAFGQKIADAKFVIADGNLYAALTPGDPLSNYGAAANIYDVSAILNPDTGLANVLANFSDATADGRESINGTEAVRVKGNVSADAVNKIAPALKADGPVPGTAWITEDDHTLLQAQLEPTPGNSVTMTLSDWGKQVNVTKPAA.

A signal peptide spans 1–25 (MQTRPRFAVQSLFAILATAAALVAG). C26 carries the N-palmitoyl cysteine lipid modification. C26 carries the S-diacylglycerol cysteine lipid modification.

It belongs to the LppX/LprAFG lipoprotein family. In terms of assembly, interacts with itself, Ag85A (MSMEG_6398), LppI (MSMEG_3851) and LppK (MSMEG_3904) in vivo.

It is found in the cell inner membrane. Its subcellular location is the secreted. It localises to the cell wall. Helps membrane protein MSMEG_3069/MSMEI_2992 (P55) transport triacylglycerides (TAG) across the inner cell membrane into the periplasm and probably ultimately to the outer membrane. Binds TAG in its hydrophobic cavity and transfers it between lipid bilayers. TAG probably regulates lipid metabolism and growth regulation and plays a structural role in the outer membrane. Also binds mannosides, lipoarabinomannan and lipomannan and various glycolipids in the same cavity. Required for MSMEG_3069/MSMEI_2992 export activity. Export of ethidium bromide by MSMEG_3069/MSMEI_2992 can be complemented by the equivalent operon from M.tuberculosis (lprG-Rv1410c). Involved in mycolylation. The sequence is that of Lipoarabinomannan carrier protein LprG from Mycolicibacterium smegmatis (strain ATCC 700084 / mc(2)155) (Mycobacterium smegmatis).